A 292-amino-acid chain; its full sequence is Succinate dehydrogenase assembly factor 2, mitochondrial (292 aa).

Disordered regions lie at residues 27–68 (RSFG…NTTS) and 266–292 (TGFH…VFDS). The segment covering 55-68 (TNRPPNQHVPNTTS) has biased composition (polar residues).

It belongs to the SDHAF2 family. As to quaternary structure, interacts with the flavoprotein subunit within the SDH catalytic dimer.

It is found in the mitochondrion matrix. In terms of biological role, plays an essential role in the assembly of succinate dehydrogenase (SDH), an enzyme complex (also referred to as respiratory complex II) that is a component of both the tricarboxylic acid (TCA) cycle and the mitochondrial electron transport chain, and which couples the oxidation of succinate to fumarate with the reduction of ubiquinone (coenzyme Q) to ubiquinol. Required for flavinylation (covalent attachment of FAD) of the flavoprotein subunit of the SDH catalytic dimer. The chain is Succinate dehydrogenase assembly factor 2, mitochondrial from Aspergillus flavus (strain ATCC 200026 / FGSC A1120 / IAM 13836 / NRRL 3357 / JCM 12722 / SRRC 167).